The chain runs to 1107 residues: Membrane-associated guanylate kinase, WW and PDZ domain-containing protein 3 (1107 aa).

Residues 17 to 102 (ECGLSGVGGD…PIRLKTVKPG (86 aa)) form the PDZ 1 domain. A Guanylate kinase-like domain is found at 110-284 (RHYLSLQFQK…SMDFRNYLTR (175 aa)). 117–124 (FQKGSIDH) contacts ATP. Residues 210-277 (FDTETQRKRT…SYNQTNSSMD (68 aa)) are disordered. The segment covering 220 to 231 (TSVSKMQRTDSS) has biased composition (polar residues). Residues 232–241 (LPEEEDEEER) are compositionally biased toward acidic residues. A compositionally biased stretch (basic and acidic residues) spans 251-261 (TDHRDRQEPSE). A compositionally biased stretch (polar residues) spans 267 to 277 (PSYNQTNSSMD). 2 consecutive WW domains span residues 289–322 (EPLP…DPRL) and 335–368 (GELP…NPVL). Residues 374–398 (KQLNPAPSEGTVHQEPENSQFTRDP) form a disordered region. 4 PDZ domains span residues 407–489 (HTSL…TLCR), 577–653 (TIPL…LILR), 727–809 (DVFL…TVRR), and 853–940 (DVIL…IAEE). Residues 941–975 (EHRGPPSGSNSARQSPAPQHRPMGQTQPTYGTLDR) are disordered. The segment covering 947–957 (SGSNSARQSPA) has biased composition (polar residues). Positions 1003–1085 (PVELERGPRG…KVLLLLRPGT (83 aa)) constitute a PDZ 6 domain.

Belongs to the MAGUK family.

Its subcellular location is the cell membrane. The protein resides in the cell junction. The protein localises to the tight junction. In terms of biological role, acts as a scaffolding protein at cell-cell junctions, thereby regulating various cellular and signaling processes. This is Membrane-associated guanylate kinase, WW and PDZ domain-containing protein 3 (magi3) from Xenopus tropicalis (Western clawed frog).